A 554-amino-acid polypeptide reads, in one-letter code: Phosphomethylpyrimidine synthase (554 aa).

Substrate-binding positions include Asn-188, Met-217, Tyr-246, His-282, 302 to 304 (SRG), 343 to 346 (DGLR), and Glu-382. His-386 serves as a coordination point for Zn(2+). Tyr-409 provides a ligand contact to substrate. Position 450 (His-450) interacts with Zn(2+). The [4Fe-4S] cluster site is built by Cys-530, Cys-533, and Cys-538.

Belongs to the ThiC family. Homodimer. It depends on [4Fe-4S] cluster as a cofactor.

It carries out the reaction 5-amino-1-(5-phospho-beta-D-ribosyl)imidazole + S-adenosyl-L-methionine = 4-amino-2-methyl-5-(phosphooxymethyl)pyrimidine + CO + 5'-deoxyadenosine + formate + L-methionine + 3 H(+). Its pathway is cofactor biosynthesis; thiamine diphosphate biosynthesis. Catalyzes the synthesis of the hydroxymethylpyrimidine phosphate (HMP-P) moiety of thiamine from aminoimidazole ribotide (AIR) in a radical S-adenosyl-L-methionine (SAM)-dependent reaction. The polypeptide is Phosphomethylpyrimidine synthase (Coxiella burnetii (strain CbuK_Q154) (Coxiella burnetii (strain Q154))).